The chain runs to 692 residues: Methionine--tRNA ligase (692 aa).

The 'HIGH' region signature appears at 12 to 22; that stretch reads PYANGSFHIGH. Zn(2+)-binding residues include C143, C146, C156, and C159. A 'KMSKS' region motif is present at residues 341–345; sequence KMSKS. K344 contributes to the ATP binding site. One can recognise a tRNA-binding domain in the interval 586–692; sequence DFAKIDLRIA…PGAQPGMRVR (107 aa).

Belongs to the class-I aminoacyl-tRNA synthetase family. MetG type 1 subfamily. Homodimer. Zn(2+) serves as cofactor.

It localises to the cytoplasm. The enzyme catalyses tRNA(Met) + L-methionine + ATP = L-methionyl-tRNA(Met) + AMP + diphosphate. Its function is as follows. Is required not only for elongation of protein synthesis but also for the initiation of all mRNA translation through initiator tRNA(fMet) aminoacylation. This Bordetella pertussis (strain Tohama I / ATCC BAA-589 / NCTC 13251) protein is Methionine--tRNA ligase.